The primary structure comprises 159 residues: MRSSTVLYVLGAAILAVNGVTTALISDGVDKGSQEQTRWLRSNAMEHETDDEERVLEFKLPSSISTWRAERFERLESLEKQKEMERQAVLELVDKYAPLLLTDRMFAGFTKLDQEGIPLPSMIALLREHGKDITSEMEAYLINSYKTTHKIPLELNTAR.

The signal sequence occupies residues 1-19 (MRSSTVLYVLGAAILAVNG). A RxLR-dEER motif is present at residues 38–54 (RWLRSNAMEHETDDEER).

Belongs to the RxLR effector family.

It is found in the secreted. The protein localises to the host nucleus. It localises to the host cytoplasm. Secreted effector that completely suppresses the host cell death induced by cell death-inducing proteins. The polypeptide is Secreted RxLR effector protein 50 (Plasmopara viticola (Downy mildew of grapevine)).